Reading from the N-terminus, the 427-residue chain is Serine--tRNA ligase (427 aa).

Residue 229-231 (TAE) participates in L-serine binding. 260-262 (RSE) contributes to the ATP binding site. Glu283 contacts L-serine. 347–350 (EISS) contacts ATP. L-serine is bound at residue Ser383.

Belongs to the class-II aminoacyl-tRNA synthetase family. Type-1 seryl-tRNA synthetase subfamily. In terms of assembly, homodimer. The tRNA molecule binds across the dimer.

It is found in the cytoplasm. It carries out the reaction tRNA(Ser) + L-serine + ATP = L-seryl-tRNA(Ser) + AMP + diphosphate + H(+). It catalyses the reaction tRNA(Sec) + L-serine + ATP = L-seryl-tRNA(Sec) + AMP + diphosphate + H(+). The protein operates within aminoacyl-tRNA biosynthesis; selenocysteinyl-tRNA(Sec) biosynthesis; L-seryl-tRNA(Sec) from L-serine and tRNA(Sec): step 1/1. Catalyzes the attachment of serine to tRNA(Ser). Is also able to aminoacylate tRNA(Sec) with serine, to form the misacylated tRNA L-seryl-tRNA(Sec), which will be further converted into selenocysteinyl-tRNA(Sec). In Nitrosococcus oceani (strain ATCC 19707 / BCRC 17464 / JCM 30415 / NCIMB 11848 / C-107), this protein is Serine--tRNA ligase.